Consider the following 937-residue polypeptide: Protein SEY1 homolog (937 aa).

Residues 1–848 (MEKGVEKTQI…ETGSKMSLKN (848 aa)) lie on the Cytoplasmic side of the membrane. The 247-residue stretch at 34 to 280 (GFSYNVIAVL…IPSDGFAQYC (247 aa)) folds into the GB1/RHD3-type G domain. 44 to 51 (GSQSSGKS) contributes to the GTP binding site. 2 coiled-coil regions span residues 319–339 (NKEI…NFKE) and 725–750 (YLDE…IIIQ). Residues 849–869 (VPVVFWIILLLFGWNEILFFI) form a helical membrane-spanning segment. Over 870 to 872 (RMF) the chain is Lumenal. The helical transmembrane segment at 873–893 (FKLNVILPLFFAAAFIVSTFV) threads the bilayer. Residues 894–937 (YNGNTQALSYINKIIFYMAKNSYNFFKHIQAISNPPPKNVQKQE) lie on the Cytoplasmic side of the membrane.

It belongs to the TRAFAC class dynamin-like GTPase superfamily. GB1/RHD3 GTPase family. RHD3 subfamily.

It localises to the endoplasmic reticulum membrane. Probable GTP-binding protein involved in generating and maintaining the structure of the tubular endoplasmic reticulum network. The sequence is that of Protein SEY1 homolog from Plasmodium falciparum (isolate 3D7).